Reading from the N-terminus, the 158-residue chain is Transcription elongation factor GreA (158 aa).

Belongs to the GreA/GreB family.

Necessary for efficient RNA polymerase transcription elongation past template-encoded arresting sites. The arresting sites in DNA have the property of trapping a certain fraction of elongating RNA polymerases that pass through, resulting in locked ternary complexes. Cleavage of the nascent transcript by cleavage factors such as GreA or GreB allows the resumption of elongation from the new 3'terminus. GreA releases sequences of 2 to 3 nucleotides. The protein is Transcription elongation factor GreA of Verminephrobacter eiseniae (strain EF01-2).